A 90-amino-acid polypeptide reads, in one-letter code: Nodulation protein F (90 aa).

The Carrier domain maps to 4 to 89 (QLESEIIGII…RHSGSHPRLA (86 aa)). S46 bears the O-(pantetheine 4'-phosphoryl)serine mark. A disordered region spans residues 65-90 (RDEHGRGVVGSPERRRHSGSHPRLAH). A compositionally biased stretch (basic residues) spans 78-90 (RRRHSGSHPRLAH).

In terms of processing, 4'-phosphopantetheine is transferred from CoA to a specific serine of apo-NodF.

Its function is as follows. Proposed to synthesize nod factor fatty acyl chain. Involved in trans-2,trans-4,trans-6,cis-11-octadecatetraenoic acid biosynthesis. This is Nodulation protein F (nodF) from Rhizobium meliloti (Ensifer meliloti).